Reading from the N-terminus, the 172-residue chain is MASNFKKANMASTTQRKRMSPKPELTEEQKQEIREAFDLFDADGTGTIDVKELKVAMRALGFEPKKEEIKKMISEIDKEGTGKMNFSDFLTVMTQKMSEKDTKEEILKAFKLFDDDETGKISFKNLKRVAKELGENLSDEELQEMIDEADRDGDGEVNEQEFLRIMKKTSLY.

The disordered stretch occupies residues 1-31 (MASNFKKANMASTTQRKRMSPKPELTEEQKQ). The residue at position 2 (alanine 2) is an N-acetylalanine. Residues 2-25 (ASNFKKANMASTTQRKRMSPKPEL) form a required for self-assembly region. Serine 20 is subject to Phosphoserine. A Glycyl lysine isopeptide (Lys-Gly) (interchain with G-Cter in SUMO2) cross-link involves residue lysine 22. Threonine 26 carries the phosphothreonine modification. EF-hand domains follow at residues 28–63 (EQKQ…LGFE), 64–99 (PKKE…KMSE), 101–136 (DTKE…LGEN), and 137–172 (LSDE…TSLY). Positions 41, 43, 45, 47, and 52 each coordinate Ca(2+). Ca(2+) contacts are provided by aspartate 150, aspartate 152, aspartate 154, glutamate 156, and glutamate 161.

This sequence belongs to the centrin family. As to quaternary structure, monomer. Homooligomer. Interacts with CCP110, SFI1. Component of the XPC complex composed of XPC, RAD23B and CETN2. Component of the nuclear pore complex (NPC)-associated TREX-2 complex (transcription and export complex 2), composed of at least GANP, 2 copies of ENY2, PCID2, SEM1/DSS1, and either centrin CETN2 or centrin CETN3. The TREX-2 complex also associates with ALYREF/ALY and with the nucleoporin NUP153. Interacts with USP49. Forms a microtubule-associated complex with POC5, POC1B and FAM161A. Interacts with CCDC15.

It localises to the cytoplasm. The protein localises to the cytoskeleton. It is found in the microtubule organizing center. Its subcellular location is the centrosome. The protein resides in the centriole. It localises to the nucleus. The protein localises to the nucleus envelope. It is found in the nuclear pore complex. Functionally, plays a fundamental role in microtubule organizing center structure and function. Required for centriole duplication and correct spindle formation. Has a role in regulating cytokinesis and genome stability via cooperation with CALM1 and CCP110. Its function is as follows. Involved in global genome nucleotide excision repair (GG-NER) by acting as component of the XPC complex. Cooperatively with RAD23B appears to stabilize XPC. In vitro, stimulates DNA binding of the XPC:RAD23B dimer. In terms of biological role, the XPC complex is proposed to represent the first factor bound at the sites of DNA damage and together with other core recognition factors, XPA, RPA and the TFIIH complex, is part of the pre-incision (or initial recognition) complex. The XPC complex recognizes a wide spectrum of damaged DNA characterized by distortions of the DNA helix such as single-stranded loops, mismatched bubbles or single-stranded overhangs. The orientation of XPC complex binding appears to be crucial for inducing a productive NER. XPC complex is proposed to recognize and to interact with unpaired bases on the undamaged DNA strand which is followed by recruitment of the TFIIH complex and subsequent scanning for lesions in the opposite strand in a 5'-to-3' direction by the NER machinery. Cyclobutane pyrimidine dimers (CPDs) which are formed upon UV-induced DNA damage esacpe detection by the XPC complex due to a low degree of structural perurbation. Instead they are detected by the UV-DDB complex which in turn recruits and cooperates with the XPC complex in the respective DNA repair. As a component of the TREX-2 complex, involved in the export of mRNAs to the cytoplasm through the nuclear pores. In Bos taurus (Bovine), this protein is Centrin-2 (CETN2).